The chain runs to 310 residues: Transaldolase (310 aa).

The active-site Schiff-base intermediate with substrate is lysine 124.

Belongs to the transaldolase family. Type 1 subfamily. In terms of assembly, homodimer.

It localises to the cytoplasm. It catalyses the reaction D-sedoheptulose 7-phosphate + D-glyceraldehyde 3-phosphate = D-erythrose 4-phosphate + beta-D-fructose 6-phosphate. Its pathway is carbohydrate degradation; pentose phosphate pathway; D-glyceraldehyde 3-phosphate and beta-D-fructose 6-phosphate from D-ribose 5-phosphate and D-xylulose 5-phosphate (non-oxidative stage): step 2/3. Transaldolase is important for the balance of metabolites in the pentose-phosphate pathway. This Teredinibacter turnerae (strain ATCC 39867 / T7901) protein is Transaldolase.